The following is a 200-amino-acid chain: NADH-quinone oxidoreductase subunit C (200 aa).

It belongs to the complex I 30 kDa subunit family. In terms of assembly, NDH-1 is composed of 14 different subunits. Subunits NuoB, C, D, E, F, and G constitute the peripheral sector of the complex.

The protein localises to the cell inner membrane. It catalyses the reaction a quinone + NADH + 5 H(+)(in) = a quinol + NAD(+) + 4 H(+)(out). Functionally, NDH-1 shuttles electrons from NADH, via FMN and iron-sulfur (Fe-S) centers, to quinones in the respiratory chain. The immediate electron acceptor for the enzyme in this species is believed to be ubiquinone. Couples the redox reaction to proton translocation (for every two electrons transferred, four hydrogen ions are translocated across the cytoplasmic membrane), and thus conserves the redox energy in a proton gradient. The protein is NADH-quinone oxidoreductase subunit C of Rhizobium etli (strain ATCC 51251 / DSM 11541 / JCM 21823 / NBRC 15573 / CFN 42).